The following is a 90-amino-acid chain: Probable Fe(2+)-trafficking protein (90 aa).

Belongs to the Fe(2+)-trafficking protein family.

Functionally, could be a mediator in iron transactions between iron acquisition and iron-requiring processes, such as synthesis and/or repair of Fe-S clusters in biosynthetic enzymes. This chain is Probable Fe(2+)-trafficking protein, found in Vibrio atlanticus (strain LGP32) (Vibrio splendidus (strain Mel32)).